Reading from the N-terminus, the 312-residue chain is Urease accessory protein UreD (312 aa).

The disordered stretch occupies residues 1–50 (MRPLAPDARCAPSRPGRGPWYARRPVTTPSDPPAALREPPPPARRAGKAG).

The protein belongs to the UreD family. As to quaternary structure, ureD, UreF and UreG form a complex that acts as a GTP-hydrolysis-dependent molecular chaperone, activating the urease apoprotein by helping to assemble the nickel containing metallocenter of UreC. The UreE protein probably delivers the nickel.

It is found in the cytoplasm. Required for maturation of urease via the functional incorporation of the urease nickel metallocenter. This Sorangium cellulosum (strain So ce56) (Polyangium cellulosum (strain So ce56)) protein is Urease accessory protein UreD.